Reading from the N-terminus, the 385-residue chain is Alkanesulfonate monooxygenase 2 (385 aa).

The protein belongs to the SsuD family.

It catalyses the reaction an alkanesulfonate + FMNH2 + O2 = an aldehyde + FMN + sulfite + H2O + 2 H(+). Catalyzes the desulfonation of aliphatic sulfonates. This Mesorhizobium japonicum (strain LMG 29417 / CECT 9101 / MAFF 303099) (Mesorhizobium loti (strain MAFF 303099)) protein is Alkanesulfonate monooxygenase 2 (ssuD2).